The primary structure comprises 519 residues: Dolichol kinase (519 aa).

Residues 1–47 (MVAIIPHASFTTIKLTQKTEGSQMPTEEICKINMRTRKFDVGGNSRD) are Cytoplasmic-facing. A helical membrane pass occupies residues 48–68 (FECFYSNFVQTVILLGTFFYC). The Lumenal segment spans residues 69-88 (VERLQPWSIVTADISYKQIF). A helical membrane pass occupies residues 89-109 (VNVFVVCLIMVGLIFTKYWQH). Residues 110 to 118 (GYKSLPKFD) lie on the Cytoplasmic side of the membrane. Residues 119-139 (TIYSLYLPFMVSLLFDTSSTV) form a helical membrane-spanning segment. The Lumenal segment spans residues 140–151 (INTILILSVLNS). The helical transmembrane segment at 152-172 (YRWRTQLVVIILQLCLIFFNF) threads the bilayer. Residues 173-181 (EAGDRLKNI) lie on the Cytoplasmic side of the membrane. Residues 182–203 (ISIVINSLLSLILKYIGQLKSL) traverse the membrane as a helical segment. Residues 204–223 (DNIDSNLFSILLTNILYVSE) are Lumenal-facing. Residues 224–244 (AGTVHFRILKGIILALTTIIS) form a helical membrane-spanning segment. The Cytoplasmic segment spans residues 245–253 (INYVLKKVM). A helical membrane pass occupies residues 254-274 (HFKPFMLSISFAIGLPLFANT). Over 275-294 (FIHLEDGENPLLWLVKYILE) the chain is Lumenal. The chain crosses the membrane as a helical span at residues 295–315 (STIRQKILFAWSSILILSIPS). The Cytoplasmic segment spans residues 316–326 (ILIEKDSLSLN). The chain crosses the membrane as a helical span at residues 327–347 (TSRKLWHFIIFLLIIPSFQMD). Over 348-349 (SN) the chain is Lumenal. A helical membrane pass occupies residues 350–370 (FVKIALSGTIPVFLSIEYIRF). The Cytoplasmic portion of the chain corresponds to 371–394 (QNLPPLGSAIELQLRRFADDRDHS). The helical transmembrane segment at 395–415 (GPLIISYLYLLFGISTPLLMN) threads the bilayer. Residues 416–417 (NS) are Lumenal-facing. Residues 418–438 (PMGLIGLGIGDSLASIIGKRY) form a helical membrane-spanning segment. The Cytoplasmic segment spans residues 439-449 (GRIRWKGTQKT). A helical transmembrane segment spans residues 450–470 (LEGTLAFIVTSFIVCLVLLRF). Topologically, residues 471–472 (DK) are lumenal. Residues 473–493 (AAIFNHLTTLQLLTLCTLSGV) traverse the membrane as a helical segment. Residues 494 to 519 (LEGNSVLNDNILIPAFMMICEKLITL) are Cytoplasmic-facing.

The protein belongs to the polyprenol kinase family.

It localises to the endoplasmic reticulum membrane. It carries out the reaction a di-trans,poly-cis-dolichol + CTP = a di-trans,poly-cis-dolichyl phosphate + CDP + H(+). It participates in protein modification; protein glycosylation. Functionally, catalyzes CTP-mediated phosphorylation of dolichol, the terminal step in de novo dolichyl monophosphate (Dol-P) biosynthesis. Dol-P is a lipid carrier essential for the synthesis of N-linked and O-linked oligosaccharides and for GPI anchors. The sequence is that of Dolichol kinase (SEC59) from Saccharomyces cerevisiae (strain ATCC 204508 / S288c) (Baker's yeast).